Reading from the N-terminus, the 289-residue chain is uncharacterized protein (289 aa).

This is an uncharacterized protein from Drosophila melanogaster (Fruit fly).